A 283-amino-acid polypeptide reads, in one-letter code: Putative aquaporin NIP4-1 (283 aa).

At M1 the chain carries N-acetylmethionine. The next 2 membrane-spanning stretches (helical) occupy residues 45 to 65 (LIAE…VVVV) and 70 to 90 (GGTI…MVMI). Residues 102-104 (NPA) carry the NPA 1 motif. 3 helical membrane passes run 122–142 (LYIG…RLMF), 161–181 (ALVA…GVAT), and 189–209 (LAGI…GPIS). The NPA 2 motif lies at 214–216 (NPA). Residues 231-251 (IWVYIVGPVLGVISGGFVYNL) form a helical membrane-spanning segment. S267 is subject to Phosphoserine.

This sequence belongs to the MIP/aquaporin (TC 1.A.8) family. NIP (TC 1.A.8.12) subfamily.

It localises to the membrane. Potential aquaporin, which may facilitate the transport of water and small neutral solutes across cell membranes. This chain is Putative aquaporin NIP4-1 (NIP4-1), found in Arabidopsis thaliana (Mouse-ear cress).